A 171-amino-acid polypeptide reads, in one-letter code: NADH-quinone oxidoreductase subunit C (171 aa).

Belongs to the complex I 30 kDa subunit family. In terms of assembly, NDH-1 is composed of 14 different subunits. Subunits NuoB, C, D, E, F, and G constitute the peripheral sector of the complex.

It is found in the cell membrane. It catalyses the reaction a quinone + NADH + 5 H(+)(in) = a quinol + NAD(+) + 4 H(+)(out). Its function is as follows. NDH-1 shuttles electrons from NADH, via FMN and iron-sulfur (Fe-S) centers, to quinones in the respiratory chain. The immediate electron acceptor for the enzyme in this species is believed to be ubiquinone. Couples the redox reaction to proton translocation (for every two electrons transferred, four hydrogen ions are translocated across the cytoplasmic membrane), and thus conserves the redox energy in a proton gradient. This chain is NADH-quinone oxidoreductase subunit C, found in Herpetosiphon aurantiacus (strain ATCC 23779 / DSM 785 / 114-95).